Consider the following 213-residue polypeptide: Carboxysome shell protein CcmP (213 aa).

2 consecutive BMC circularly permuted domains span residues 4 to 106 and 107 to 211; these read ELRS…RLKP and KIVS…GDRS. Residues 69–70 carry the Probably important for pore gating motif; it reads ER.

Belongs to the EutL/PduB family. A dimer of stacked trimers, the same faces interact.

Its subcellular location is the carboxysome. Functionally, probably part of the carboxysome shell, a polyhedral inclusion where RuBisCO (ribulose bisphosphate carboxylase, rbcL-rbcS) is sequestered. It is thought that this protein controls transport of RuBisCO reactants in and out of the carboxysome; residual densities in the 4 X-ray structures suggest that differing compounds bind in interior pockets, depending on the open or closed state of the pore. The sequence is that of Carboxysome shell protein CcmP from Synechococcus elongatus (strain ATCC 33912 / PCC 7942 / FACHB-805) (Anacystis nidulans R2).